Reading from the N-terminus, the 244-residue chain is Small ribosomal subunit protein uS2 (244 aa).

Belongs to the universal ribosomal protein uS2 family.

This Hydrogenovibrio crunogenus (strain DSM 25203 / XCL-2) (Thiomicrospira crunogena) protein is Small ribosomal subunit protein uS2.